Reading from the N-terminus, the 70-residue chain is uncharacterized protein (70 aa).

2 consecutive transmembrane segments (helical) span residues 19–39 (VIALVVFGGLIVSVVGFVVGL) and 40–60 (LFKLLVFVALVGGLIYVVRKF).

It localises to the cell membrane. This is an uncharacterized protein from Streptomyces coelicolor (strain ATCC BAA-471 / A3(2) / M145).